We begin with the raw amino-acid sequence, 645 residues long: Sodium-dependent nutrient amino acid transporter 1 (645 aa).

The disordered stretch occupies residues M1–G48. At M1–N51 the chain is on the cytoplasmic side. Low complexity predominate over residues N18–D32. Residues T33–G48 are compositionally biased toward basic and acidic residues. 3 consecutive transmembrane segments (helical) span residues W52 to V72, G85 to L105, and T138 to V158. Residues N191 and N205 are each glycosylated (N-linked (GlcNAc...) asparagine). 7 consecutive transmembrane segments (helical) span residues I234–I254, A264–V284, A313–S333, I347–L367, L407–L427, C454–V474, and T480–L500. N514 carries N-linked (GlcNAc...) asparagine glycosylation. The next 2 helical transmembrane spans lie at C522–I542 and A559–I579.

It belongs to the sodium:neurotransmitter symporter (SNF) (TC 2.A.22) family.

The protein localises to the membrane. Unusual broad substrate spectrum amino acid:sodium cotransporter that promotes absorption of the D isomers of essential amino acids. Neutral amino acids are the preferred substrates, especially methionine and phenylalanine. The chain is Sodium-dependent nutrient amino acid transporter 1 from Drosophila mojavensis (Fruit fly).